The primary structure comprises 70 residues: Cold shock-like protein CspG (70 aa).

In terms of domain architecture, CSD spans 7–67 (GLVKWFNADK…GQRGPAAANV (61 aa)).

It is found in the cytoplasm. The protein is Cold shock-like protein CspG (cspG) of Escherichia coli O157:H7.